The following is a 248-amino-acid chain: Pyridoxine 5'-phosphate synthase (248 aa).

3-amino-2-oxopropyl phosphate is bound at residue asparagine 11. 13–14 (DH) contacts 1-deoxy-D-xylulose 5-phosphate. Arginine 22 is a binding site for 3-amino-2-oxopropyl phosphate. The Proton acceptor role is filled by histidine 47. 2 residues coordinate 1-deoxy-D-xylulose 5-phosphate: arginine 49 and histidine 54. The active-site Proton acceptor is the glutamate 74. Threonine 104 lines the 1-deoxy-D-xylulose 5-phosphate pocket. Histidine 198 (proton donor) is an active-site residue. Residues glycine 199 and 220–221 (GH) contribute to the 3-amino-2-oxopropyl phosphate site.

It belongs to the PNP synthase family. As to quaternary structure, homooctamer; tetramer of dimers.

Its subcellular location is the cytoplasm. It carries out the reaction 3-amino-2-oxopropyl phosphate + 1-deoxy-D-xylulose 5-phosphate = pyridoxine 5'-phosphate + phosphate + 2 H2O + H(+). The protein operates within cofactor biosynthesis; pyridoxine 5'-phosphate biosynthesis; pyridoxine 5'-phosphate from D-erythrose 4-phosphate: step 5/5. Functionally, catalyzes the complicated ring closure reaction between the two acyclic compounds 1-deoxy-D-xylulose-5-phosphate (DXP) and 3-amino-2-oxopropyl phosphate (1-amino-acetone-3-phosphate or AAP) to form pyridoxine 5'-phosphate (PNP) and inorganic phosphate. The protein is Pyridoxine 5'-phosphate synthase of Ruegeria pomeroyi (strain ATCC 700808 / DSM 15171 / DSS-3) (Silicibacter pomeroyi).